We begin with the raw amino-acid sequence, 45 residues long: Peroxidase 3 (45 aa).

It belongs to the peroxidase family. Classical plant (class III) peroxidase subfamily. Requires heme b as cofactor. Ca(2+) serves as cofactor.

The protein localises to the secreted. It carries out the reaction 2 a phenolic donor + H2O2 = 2 a phenolic radical donor + 2 H2O. Functionally, removal of H(2)O(2), oxidation of toxic reductants, biosynthesis and degradation of lignin, suberization, auxin catabolism, response to environmental stresses such as wounding, pathogen attack and oxidative stress. These functions might be dependent on each isozyme/isoform in each plant tissue. This Capsicum annuum (Capsicum pepper) protein is Peroxidase 3.